Here is a 185-residue protein sequence, read N- to C-terminus: Putative manganese efflux pump MntP (185 aa).

6 consecutive transmembrane segments (helical) span residues 4-24 (LTSS…ALAI), 36-56 (ALVI…AGWI), 65-85 (ISSY…IKMI), 105-125 (VILL…SFGV), 130-150 (VLMP…AGVF), and 165-185 (IFGG…ILPL).

It belongs to the MntP (TC 9.B.29) family.

It localises to the cell membrane. In terms of biological role, probably functions as a manganese efflux pump. The chain is Putative manganese efflux pump MntP from Methanoregula boonei (strain DSM 21154 / JCM 14090 / 6A8).